We begin with the raw amino-acid sequence, 141 residues long: Hemoglobin subunit alpha (141 aa).

Residues 1-141 (VLSSADKNNV…VSTVLTSKYR (141 aa)) form the Globin domain. A Phosphoserine modification is found at S3. K7 and K11 each carry N6-succinyllysine. At K16 the chain carries N6-acetyllysine; alternate. Position 16 is an N6-succinyllysine; alternate (K16). Y24 is subject to Phosphotyrosine. Position 35 is a phosphoserine (S35). The residue at position 40 (K40) is an N6-succinyllysine. The residue at position 49 (S49) is a Phosphoserine. H58 is an O2 binding site. A heme b-binding site is contributed by H87. S102 carries the post-translational modification Phosphoserine. T108 is subject to Phosphothreonine. Position 124 is a phosphoserine (S124). T134 and T137 each carry phosphothreonine. S138 is subject to Phosphoserine.

It belongs to the globin family. As to quaternary structure, heterotetramer of two alpha chains and two beta chains. As to expression, red blood cells.

In terms of biological role, involved in oxygen transport from the lung to the various peripheral tissues. Functionally, hemopressin acts as an antagonist peptide of the cannabinoid receptor CNR1. Hemopressin-binding efficiently blocks cannabinoid receptor CNR1 and subsequent signaling. The polypeptide is Hemoglobin subunit alpha (HBA) (Panthera pardus saxicolor (Northern Persian leopard)).